The primary structure comprises 282 residues: Bifunctional protein FolD (282 aa).

NADP(+) contacts are provided by residues 164–166, Ile-189, and Ile-230; that span reads GAS.

The protein belongs to the tetrahydrofolate dehydrogenase/cyclohydrolase family. As to quaternary structure, homodimer.

The enzyme catalyses (6R)-5,10-methylene-5,6,7,8-tetrahydrofolate + NADP(+) = (6R)-5,10-methenyltetrahydrofolate + NADPH. The catalysed reaction is (6R)-5,10-methenyltetrahydrofolate + H2O = (6R)-10-formyltetrahydrofolate + H(+). Its pathway is one-carbon metabolism; tetrahydrofolate interconversion. Functionally, catalyzes the oxidation of 5,10-methylenetetrahydrofolate to 5,10-methenyltetrahydrofolate and then the hydrolysis of 5,10-methenyltetrahydrofolate to 10-formyltetrahydrofolate. The chain is Bifunctional protein FolD from Campylobacter jejuni subsp. jejuni serotype O:6 (strain 81116 / NCTC 11828).